A 1050-amino-acid polypeptide reads, in one-letter code: Probable E3 ubiquitin-protein ligase HERC3 (1050 aa).

RCC1 repeat units follow at residues 1–51, 52–101, 102–154, 156–207, 208–259, 261–311, and 313–366; these read MLCW…FLLE, DGEV…ALSD, RGQL…ALAA, GQFF…ALSL, SGAV…VLTK, GGVF…AFVP, and SGLI…IVKQ. Residues 951-1050 enclose the HECT domain; the sequence is YKGDYSATHP…LDNYEGFSLA (100 aa). The active-site Glycyl thioester intermediate is the Cys-1018.

In terms of processing, ubiquitinated; which promotes degradation by the proteasome.

It is found in the cytoplasm. The protein resides in the cytoplasmic vesicle. It carries out the reaction S-ubiquitinyl-[E2 ubiquitin-conjugating enzyme]-L-cysteine + [acceptor protein]-L-lysine = [E2 ubiquitin-conjugating enzyme]-L-cysteine + N(6)-ubiquitinyl-[acceptor protein]-L-lysine.. The protein operates within protein modification; protein ubiquitination. In terms of biological role, E3 ubiquitin-protein ligase which accepts ubiquitin from an E2 ubiquitin-conjugating enzyme in the form of a thioester and then directly transfers the ubiquitin to targeted substrates. The protein is Probable E3 ubiquitin-protein ligase HERC3 (HERC3) of Homo sapiens (Human).